A 202-amino-acid chain; its full sequence is Probable GTP-binding protein EngB (202 aa).

The 172-residue stretch at 30–201 (NILQIALAGR…WERIQYTIDS (172 aa)) folds into the EngB-type G domain. Residues 38-45 (GRSNVGKS), 65-69 (GKTRS), 84-87 (DLPG), 151-154 (TKID), and 180-182 (VSS) contribute to the GTP site. 2 residues coordinate Mg(2+): Ser45 and Thr67.

This sequence belongs to the TRAFAC class TrmE-Era-EngA-EngB-Septin-like GTPase superfamily. EngB GTPase family. Mg(2+) serves as cofactor.

Functionally, necessary for normal cell division and for the maintenance of normal septation. The polypeptide is Probable GTP-binding protein EngB (Lawsonia intracellularis (strain PHE/MN1-00)).